A 190-amino-acid polypeptide reads, in one-letter code: CASP-like protein 1E2 (190 aa).

The span at 1 to 12 shows a compositional bias: low complexity; the sequence is MENEGKNNMNGM. Residues 1–24 form a disordered region; it reads MENEGKNNMNGMEMEKGKRESRSR. The Cytoplasmic segment spans residues 1-28; it reads MENEGKNNMNGMEMEKGKRESRSRKGVE. The segment covering 13–24 has biased composition (basic and acidic residues); the sequence is EMEKGKRESRSR. A helical membrane pass occupies residues 29-49; the sequence is LTMRVLALVLTMAAATVLGVA. Topologically, residues 50–83 are extracellular; it reads KQTKVVSIKLIPALPPLDITTTAKASYLSAFVYN. The chain crosses the membrane as a helical span at residues 84-104; that stretch reads ISANAIACGYTAISIAILMIS. The Cytoplasmic segment spans residues 105–111; it reads RGRRSKK. A helical transmembrane segment spans residues 112-132; sequence LLMAVLLGDLVMVALLFSGTG. The Extracellular segment spans residues 133–163; that stretch reads AASAIGLMGLQGNKHVMWNKVCGVFGKFCHR. Residues 164 to 184 traverse the membrane as a helical segment; that stretch reads AAPSLPLTFLAAVVFMFLVVL. Residues 185–190 are Cytoplasmic-facing; that stretch reads DAIKLP.

Belongs to the Casparian strip membrane proteins (CASP) family. Homodimer and heterodimers.

The protein resides in the cell membrane. This is CASP-like protein 1E2 from Arabidopsis lyrata subsp. lyrata (Lyre-leaved rock-cress).